Here is a 189-residue protein sequence, read N- to C-terminus: Peptidyl-tRNA hydrolase (189 aa).

Y16 provides a ligand contact to tRNA. The Proton acceptor role is filled by H21. Positions 67, 69, and 115 each coordinate tRNA.

It belongs to the PTH family. As to quaternary structure, monomer.

It is found in the cytoplasm. It carries out the reaction an N-acyl-L-alpha-aminoacyl-tRNA + H2O = an N-acyl-L-amino acid + a tRNA + H(+). Hydrolyzes ribosome-free peptidyl-tRNAs (with 1 or more amino acids incorporated), which drop off the ribosome during protein synthesis, or as a result of ribosome stalling. In terms of biological role, catalyzes the release of premature peptidyl moieties from peptidyl-tRNA molecules trapped in stalled 50S ribosomal subunits, and thus maintains levels of free tRNAs and 50S ribosomes. In Legionella pneumophila (strain Lens), this protein is Peptidyl-tRNA hydrolase.